Consider the following 186-residue polypeptide: Protein C (186 aa).

Over residues Met1–Ser15 the composition is skewed to polar residues. The interval Met1–Gly44 is disordered.

Belongs to the morbillivirus protein C family. Interacts with the phosphoprotein (via C-terminus); this interaction allows C to associate with the ribonucleocapsid.

It localises to the host nucleus. The protein localises to the host cytoplasmic vesicle. Functionally, ribonucleocapsid-associated protein that interacts with the phosphoprotein (P), thereby increasing replication accuracy and processivity of the polymerase complex. This chain is Protein C (P/V/C), found in Homo sapiens (Human).